The sequence spans 397 residues: Bifunctional arginine demethylase and lysyl-hydroxylase psr-1 (397 aa).

One can recognise a JmjC domain in the interval 146–310 (RKTKKLSEDY…LVWPKTVRGR (165 aa)). A substrate-binding site is contributed by Thr189. Positions 192 and 194 each coordinate Fe cation. Residue Asn202 participates in 2-oxoglutarate binding. Lys209 lines the substrate pocket. Fe cation is bound at residue His278. Position 290 (Thr290) interacts with 2-oxoglutarate. Polar residues predominate over residues 334–344 (SCTDTPPQSLN). Residues 334 to 383 (SCTDTPPQSLNDSSSDSSSSSSSSDDSSDSETEEDSGRCGLGNRKRRNDV) are disordered. Positions 345–358 (DSSSDSSSSSSSSD) are enriched in low complexity.

This sequence belongs to the JMJD6 family. In terms of assembly, interacts with ced-5 and ced-12. The cofactor is Fe(2+).

Its subcellular location is the nucleus. In terms of biological role, dioxygenase that can both act as a histone arginine demethylase and a lysyl-hydroxylase. In Caenorhabditis briggsae, this protein is Bifunctional arginine demethylase and lysyl-hydroxylase psr-1 (psr-1).